The chain runs to 71 residues: Exodeoxyribonuclease 7 small subunit (71 aa).

This sequence belongs to the XseB family. In terms of assembly, heterooligomer composed of large and small subunits.

It localises to the cytoplasm. It carries out the reaction Exonucleolytic cleavage in either 5'- to 3'- or 3'- to 5'-direction to yield nucleoside 5'-phosphates.. Bidirectionally degrades single-stranded DNA into large acid-insoluble oligonucleotides, which are then degraded further into small acid-soluble oligonucleotides. The sequence is that of Exodeoxyribonuclease 7 small subunit from Streptococcus equi subsp. equi (strain 4047).